Consider the following 778-residue polypeptide: Probable protein kinase DDB_G0291133 (778 aa).

Residues 129–162 (LSINNNNNNNNNNGGYKIPSSVNKNSNNYNSNSN) form a disordered region. The 286-residue stretch at 177–462 (FDVVCKLGSG…LDQILLNENI (286 aa)) folds into the Protein kinase domain. ATP contacts are provided by residues 183–191 (LGSGSFSDV) and lysine 206. The active-site Proton acceptor is aspartate 303. Residues asparagine 308 and aspartate 321 each coordinate Mg(2+). Disordered stretches follow at residues 478 to 509 (NIENDNNNNNNTDNNNNNNTDNINNDNNDDNN), 562 to 697 (HFVR…GFYG), and 757 to 778 (SHPQESDKMSPRNLLSLFQETN). Residues 578-590 (SDEEEDDDDDDDS) show a composition bias toward acidic residues. Residues 599-651 (SLNNLNNSSSNIGISESNSNNSFSSILEENNESSSSSPLPSLSFSRRLSTSSL) are compositionally biased toward low complexity. The segment covering 652 to 670 (VTTISPKPNFNTSGNKLFS) has biased composition (polar residues). The span at 671–693 (NENNNSNNNNNNNNNNQNNNNNN) shows a compositional bias: low complexity. Basic and acidic residues predominate over residues 757–766 (SHPQESDKMS).

The protein belongs to the protein kinase superfamily. Ser/Thr protein kinase family. WEE1 subfamily.

The enzyme catalyses L-seryl-[protein] + ATP = O-phospho-L-seryl-[protein] + ADP + H(+). It carries out the reaction L-threonyl-[protein] + ATP = O-phospho-L-threonyl-[protein] + ADP + H(+). This chain is Probable protein kinase DDB_G0291133, found in Dictyostelium discoideum (Social amoeba).